The chain runs to 157 residues: Large ribosomal subunit protein uL15 (157 aa).

Positions 1–64 (MKLNEIPAVP…MPLQRRLPKR (64 aa)) are disordered. The segment covering 21–31 (RGPGSGNGKTA) has biased composition (gly residues).

It belongs to the universal ribosomal protein uL15 family. In terms of assembly, part of the 50S ribosomal subunit.

Binds to the 23S rRNA. The chain is Large ribosomal subunit protein uL15 from Magnetococcus marinus (strain ATCC BAA-1437 / JCM 17883 / MC-1).